The primary structure comprises 135 residues: Small ribosomal subunit protein uS12 (135 aa).

A 3-methylthioaspartic acid modification is found at aspartate 89. The disordered stretch occupies residues 103-135; sequence DTAGVKNRMQSRSKYGTKRPKPGQAAAPAGKKR. The segment covering 111 to 123 has biased composition (basic residues); that stretch reads MQSRSKYGTKRPK. The span at 124-135 shows a compositional bias: low complexity; sequence PGQAAAPAGKKR.

The protein belongs to the universal ribosomal protein uS12 family. As to quaternary structure, part of the 30S ribosomal subunit. Contacts proteins S8 and S17. May interact with IF1 in the 30S initiation complex.

Its function is as follows. With S4 and S5 plays an important role in translational accuracy. Interacts with and stabilizes bases of the 16S rRNA that are involved in tRNA selection in the A site and with the mRNA backbone. Located at the interface of the 30S and 50S subunits, it traverses the body of the 30S subunit contacting proteins on the other side and probably holding the rRNA structure together. The combined cluster of proteins S8, S12 and S17 appears to hold together the shoulder and platform of the 30S subunit. The protein is Small ribosomal subunit protein uS12 of Gloeobacter violaceus (strain ATCC 29082 / PCC 7421).